A 129-amino-acid polypeptide reads, in one-letter code: Small ribosomal subunit protein uS11 (129 aa).

The protein belongs to the universal ribosomal protein uS11 family. Part of the 30S ribosomal subunit. Interacts with proteins S7 and S18. Binds to IF-3.

Located on the platform of the 30S subunit, it bridges several disparate RNA helices of the 16S rRNA. Forms part of the Shine-Dalgarno cleft in the 70S ribosome. The chain is Small ribosomal subunit protein uS11 from Mycoplasma mycoides subsp. mycoides SC (strain CCUG 32753 / NCTC 10114 / PG1).